A 34-amino-acid chain; its full sequence is Mytilin-A (34 aa).

4 disulfides stabilise this stretch: Cys2–Cys27, Cys6–Cys29, Cys10–Cys31, and Cys15–Cys34.

It is found in the secreted. In terms of biological role, has antibacterial activity against A.viridans, B.megaterium, M.luteus, E.faecalis, S.aureus and E.coli. It is active against the marine species A.carrageenovora, P.alginovora and C.drobachiensis. The protein is Mytilin-A of Mytilus edulis (Blue mussel).